Consider the following 640-residue polypeptide: Chaperone protein HtpG (640 aa).

An a; substrate-binding region spans residues 1–348; it reads MAQYKFETEV…SEDLPLNVSR (348 aa). The segment at 349-565 is b; that stretch reads EILQQNRILS…ETDPSLQMER (217 aa). The tract at residues 566–640 is c; the sequence is MMRAMGQFNT…RLNRLMTNLK (75 aa).

This sequence belongs to the heat shock protein 90 family. In terms of assembly, homodimer.

It localises to the cytoplasm. In terms of biological role, molecular chaperone. Has ATPase activity. The protein is Chaperone protein HtpG of Treponema denticola (strain ATCC 35405 / DSM 14222 / CIP 103919 / JCM 8153 / KCTC 15104).